The chain runs to 246 residues: FAD synthetase (246 aa).

The protein belongs to the RibF family.

The catalysed reaction is FMN + ATP + H(+) = FAD + diphosphate. It participates in cofactor biosynthesis; FAD biosynthesis; FAD from FMN: step 1/1. In terms of biological role, catalyzes the adenylation of flavin mononucleotide (FMN) to form flavin adenine dinucleotide (FAD) coenzyme. Can also catalyze, with lower efficiency, the adenylation of the toxic riboflavin analogs 8-demethyl-8-aminoriboflavin mononucleotide (AFMN) and roseoflavin mononucleotide (RoFMN) to 8-demethyl-8-aminoriboflavin adenine dinucleotide (AFAD) and roseoflavin adenine dinucleotide (RoFAD), respectively. In Listeria monocytogenes serovar 1/2a (strain ATCC BAA-679 / EGD-e), this protein is FAD synthetase.